We begin with the raw amino-acid sequence, 228 residues long: Phosphoribosylformylglycinamidine synthase subunit PurQ (228 aa).

Positions 3 to 226 constitute a Glutamine amidotransferase type-1 domain; sequence FAVVVFPGSN…VTYWRDAHVV (224 aa). Residue Cys-86 is the Nucleophile of the active site. Active-site residues include His-195 and Glu-197.

As to quaternary structure, part of the FGAM synthase complex composed of 1 PurL, 1 PurQ and 2 PurS subunits.

The protein localises to the cytoplasm. The catalysed reaction is N(2)-formyl-N(1)-(5-phospho-beta-D-ribosyl)glycinamide + L-glutamine + ATP + H2O = 2-formamido-N(1)-(5-O-phospho-beta-D-ribosyl)acetamidine + L-glutamate + ADP + phosphate + H(+). The enzyme catalyses L-glutamine + H2O = L-glutamate + NH4(+). Its pathway is purine metabolism; IMP biosynthesis via de novo pathway; 5-amino-1-(5-phospho-D-ribosyl)imidazole from N(2)-formyl-N(1)-(5-phospho-D-ribosyl)glycinamide: step 1/2. Part of the phosphoribosylformylglycinamidine synthase complex involved in the purines biosynthetic pathway. Catalyzes the ATP-dependent conversion of formylglycinamide ribonucleotide (FGAR) and glutamine to yield formylglycinamidine ribonucleotide (FGAM) and glutamate. The FGAM synthase complex is composed of three subunits. PurQ produces an ammonia molecule by converting glutamine to glutamate. PurL transfers the ammonia molecule to FGAR to form FGAM in an ATP-dependent manner. PurS interacts with PurQ and PurL and is thought to assist in the transfer of the ammonia molecule from PurQ to PurL. The sequence is that of Phosphoribosylformylglycinamidine synthase subunit PurQ from Anoxybacillus flavithermus (strain DSM 21510 / WK1).